Reading from the N-terminus, the 300-residue chain is MTQILVKNAFSWVNIAEDVCKFIPNCKLTVIDKEAIPSVEDTNVIYIGDLMNVKTISMLERIKAKNVVLWVDETRVPKTSYSLKNLKYNYWIVPVSQWNKEVYEEHIGHTEEIIPRCTEFRRTEGKRRGNVLFGVVSFTPGVYKRYEELLLAVDYYRKNYGELEIYAYGHTEGLPSFPGVHNMGRLGKSEIQKLYSIADFAIELGIEAFGMPSIEAWAMQVPMLYGNVNDVRNHAYGVSIDPVDFDAIDFGEYILPVPIYDEYKLAEKIREVAEIEEVPELPEKYRCSYTAKKLISYLEA.

The protein belongs to the glycosyltransferase group 1 family. Glycosyltransferase 4 subfamily.

The sequence is that of Putative glycosyltransferase ORF300 from Acidianus hospitalis (AFV-1).